The chain runs to 88 residues: Cytochrome c oxidase subunit 6B2 (88 aa).

The tract at residues 1–21 is disordered; the sequence is MLGVQAQMPAPGQWTTPPFDP. In terms of domain architecture, CHCH spans 29–75; sequence TRNCYQNFLDYHRCVKTMDRRGKNTQACDYYFRVFHSLCPVSWVQRW. The short motif at 32 to 42 is the Cx9C motif element; it reads CYQNFLDYHRC. 2 disulfides stabilise this stretch: cysteine 32–cysteine 67 and cysteine 42–cysteine 56. The Cx10C motif signature appears at 56 to 67; the sequence is CDYYFRVFHSLC.

This sequence belongs to the cytochrome c oxidase subunit 6B family. As to quaternary structure, component of the cytochrome c oxidase (complex IV, CIV), a multisubunit enzyme composed of 14 subunits. The complex is composed of a catalytic core of 3 subunits MT-CO1, MT-CO2 and MT-CO3, encoded in the mitochondrial DNA, and 11 supernumerary subunits COX4I, COX5A, COX5B, COX6A, COX6B, COX6C, COX7A, COX7B, COX7C, COX8 and NDUFA4, which are encoded in the nuclear genome. The complex exists as a monomer or a dimer and forms supercomplexes (SCs) in the inner mitochondrial membrane with NADH-ubiquinone oxidoreductase (complex I, CI) and ubiquinol-cytochrome c oxidoreductase (cytochrome b-c1 complex, complex III, CIII), resulting in different assemblies (supercomplex SCI(1)III(2)IV(1) and megacomplex MCI(2)III(2)IV(2)). As to expression, testis specific.

The protein resides in the mitochondrion inner membrane. The protein operates within energy metabolism; oxidative phosphorylation. In terms of biological role, component of the cytochrome c oxidase, the last enzyme in the mitochondrial electron transport chain which drives oxidative phosphorylation. The respiratory chain contains 3 multisubunit complexes succinate dehydrogenase (complex II, CII), ubiquinol-cytochrome c oxidoreductase (cytochrome b-c1 complex, complex III, CIII) and cytochrome c oxidase (complex IV, CIV), that cooperate to transfer electrons derived from NADH and succinate to molecular oxygen, creating an electrochemical gradient over the inner membrane that drives transmembrane transport and the ATP synthase. Cytochrome c oxidase is the component of the respiratory chain that catalyzes the reduction of oxygen to water. Electrons originating from reduced cytochrome c in the intermembrane space (IMS) are transferred via the dinuclear copper A center (CU(A)) of subunit 2 and heme A of subunit 1 to the active site in subunit 1, a binuclear center (BNC) formed by heme A3 and copper B (CU(B)). The BNC reduces molecular oxygen to 2 water molecules using 4 electrons from cytochrome c in the IMS and 4 protons from the mitochondrial matrix. This chain is Cytochrome c oxidase subunit 6B2 (Cox6b2), found in Rattus norvegicus (Rat).